We begin with the raw amino-acid sequence, 205 residues long: Probable thymidylate kinase (205 aa).

Residue 7 to 14 participates in ATP binding; it reads GIDGSGKS.

This sequence belongs to the thymidylate kinase family.

The catalysed reaction is dTMP + ATP = dTDP + ADP. The sequence is that of Probable thymidylate kinase from Methanoculleus marisnigri (strain ATCC 35101 / DSM 1498 / JR1).